Consider the following 247-residue polypeptide: MSNEFIYGIHAVRAVLDKEPERFIEAYVLKGRQDDRLMPILNELQMVGVSLQQMTRKTLDDKAHGANHQGIIARVKPAKQLNENDLDDILAKHASPLLLILDGVTDPHNLGACLRNADAAGVAAVIVPKDKSAPMTATVSKVACGAAETVPLVRVTNLARTMRHLQEQGIWIVGTAGEATHDIYQAKLTGSLAIVMGAEGDGMRRLTRETCDDLIKIPMAGAVSSLNVSVASGICLFEAVRQRLASQ.

Glycine 197, isoleucine 217, and leucine 226 together coordinate S-adenosyl-L-methionine.

The protein belongs to the class IV-like SAM-binding methyltransferase superfamily. RNA methyltransferase TrmH family. RlmB subfamily.

The protein localises to the cytoplasm. The enzyme catalyses guanosine(2251) in 23S rRNA + S-adenosyl-L-methionine = 2'-O-methylguanosine(2251) in 23S rRNA + S-adenosyl-L-homocysteine + H(+). Functionally, specifically methylates the ribose of guanosine 2251 in 23S rRNA. In Vibrio vulnificus (strain CMCP6), this protein is 23S rRNA (guanosine-2'-O-)-methyltransferase RlmB.